The chain runs to 187 residues: MISSNDFRTGTTIEIDGAVWRVVEFLHVKPGKGSAFVRTKLKAVKSGNVVEKTFRAGEMLPQAMLEKSSLQHTYMEGEDYVFMDMATYEETRLSADQIGESRKYLKEGMEVNVVSWNDTPLEVELPNSVVLEIKETDPGVKGDTATGGTKPAILETGAQVMVPLFLSVGEKIKVDTRNDSYLGRENG.

The protein belongs to the elongation factor P family.

Its subcellular location is the cytoplasm. Its pathway is protein biosynthesis; polypeptide chain elongation. In terms of biological role, involved in peptide bond synthesis. Stimulates efficient translation and peptide-bond synthesis on native or reconstituted 70S ribosomes in vitro. Probably functions indirectly by altering the affinity of the ribosome for aminoacyl-tRNA, thus increasing their reactivity as acceptors for peptidyl transferase. In Synechococcus sp. (strain CC9605), this protein is Elongation factor P.